We begin with the raw amino-acid sequence, 413 residues long: Arogenate dehydratase/prephenate dehydratase 6, chloroplastic (413 aa).

The N-terminal 44 residues, 1 to 44 (MKALSSSSPILGASQPATATALIARSGRSEWQSSCAILTSKVIS), are a transit peptide targeting the chloroplast. One can recognise a Prephenate dehydratase domain in the interval 117-294 (RVAYQGVPGA…NVTRFVMLAR (178 aa)). One can recognise an ACT domain in the interval 308–399 (SIVFAHEKGT…SFLRVLGSYP (92 aa)).

As to expression, expressed in roots, leaves, stems, flowers and siliques.

It localises to the plastid. Its subcellular location is the chloroplast stroma. It carries out the reaction L-arogenate + H(+) = L-phenylalanine + CO2 + H2O. The catalysed reaction is prephenate + H(+) = 3-phenylpyruvate + CO2 + H2O. Its pathway is amino-acid biosynthesis; L-phenylalanine biosynthesis; L-phenylalanine from L-arogenate: step 1/1. The protein operates within amino-acid biosynthesis; L-phenylalanine biosynthesis; phenylpyruvate from prephenate: step 1/1. Functionally, converts the prephenate produced from the shikimate-chorismate pathway into phenylalanine. Dehydratase that uses arogenate and prephenate as substrates. Utilzes more efficiently arogenate than prephenate. This chain is Arogenate dehydratase/prephenate dehydratase 6, chloroplastic, found in Arabidopsis thaliana (Mouse-ear cress).